A 174-amino-acid polypeptide reads, in one-letter code: Protein VdlD (174 aa).

The region spanning 20–132 is the HotDog ACOT-type domain; the sequence is DRTKLLMSYL…YFTMVAVENG (113 aa).

Belongs to the acyl coenzyme A hydrolase family.

The chain is Protein VdlD (vdlD) from Helicobacter pylori (strain J99 / ATCC 700824) (Campylobacter pylori J99).